The sequence spans 214 residues: ATP phosphoribosyltransferase (214 aa).

It belongs to the ATP phosphoribosyltransferase family. Short subfamily. In terms of assembly, heteromultimer composed of HisG and HisZ subunits.

The protein localises to the cytoplasm. It carries out the reaction 1-(5-phospho-beta-D-ribosyl)-ATP + diphosphate = 5-phospho-alpha-D-ribose 1-diphosphate + ATP. It functions in the pathway amino-acid biosynthesis; L-histidine biosynthesis; L-histidine from 5-phospho-alpha-D-ribose 1-diphosphate: step 1/9. Its function is as follows. Catalyzes the condensation of ATP and 5-phosphoribose 1-diphosphate to form N'-(5'-phosphoribosyl)-ATP (PR-ATP). Has a crucial role in the pathway because the rate of histidine biosynthesis seems to be controlled primarily by regulation of HisG enzymatic activity. The sequence is that of ATP phosphoribosyltransferase from Methylobacillus flagellatus (strain ATCC 51484 / DSM 6875 / VKM B-1610 / KT).